Here is a 151-residue protein sequence, read N- to C-terminus: Ribosome maturation factor RimP (151 aa).

It belongs to the RimP family.

Its subcellular location is the cytoplasm. Its function is as follows. Required for maturation of 30S ribosomal subunits. In Caldicellulosiruptor bescii (strain ATCC BAA-1888 / DSM 6725 / KCTC 15123 / Z-1320) (Anaerocellum thermophilum), this protein is Ribosome maturation factor RimP.